We begin with the raw amino-acid sequence, 129 residues long: ATP synthase epsilon chain (129 aa).

It belongs to the ATPase epsilon chain family. As to quaternary structure, F-type ATPases have 2 components, CF(1) - the catalytic core - and CF(0) - the membrane proton channel. CF(1) has five subunits: alpha(3), beta(3), gamma(1), delta(1), epsilon(1). CF(0) has three main subunits: a, b and c.

It localises to the cell inner membrane. In terms of biological role, produces ATP from ADP in the presence of a proton gradient across the membrane. This is ATP synthase epsilon chain from Campylobacter concisus (strain 13826).